A 332-amino-acid chain; its full sequence is 5-dehydro-2-deoxygluconokinase (332 aa).

The protein belongs to the carbohydrate kinase PfkB family.

It catalyses the reaction 5-dehydro-2-deoxy-D-gluconate + ATP = 6-phospho-5-dehydro-2-deoxy-D-gluconate + ADP + H(+). It functions in the pathway polyol metabolism; myo-inositol degradation into acetyl-CoA; acetyl-CoA from myo-inositol: step 5/7. In terms of biological role, catalyzes the phosphorylation of 5-dehydro-2-deoxy-D-gluconate (2-deoxy-5-keto-D-gluconate or DKG) to 6-phospho-5-dehydro-2-deoxy-D-gluconate (DKGP). The sequence is that of 5-dehydro-2-deoxygluconokinase from Bacillus thuringiensis subsp. konkukian (strain 97-27).